A 127-amino-acid polypeptide reads, in one-letter code: Large ribosomal subunit protein bL17 (127 aa).

This sequence belongs to the bacterial ribosomal protein bL17 family. In terms of assembly, part of the 50S ribosomal subunit. Contacts protein L32.

The chain is Large ribosomal subunit protein bL17 from Actinobacillus pleuropneumoniae serotype 7 (strain AP76).